The following is a 490-amino-acid chain: Probable glycine dehydrogenase (decarboxylating) subunit 2 (490 aa).

At Lys273 the chain carries N6-(pyridoxal phosphate)lysine.

It belongs to the GcvP family. C-terminal subunit subfamily. In terms of assembly, the glycine cleavage system is composed of four proteins: P, T, L and H. In this organism, the P 'protein' is a heterodimer of two subunits. Pyridoxal 5'-phosphate is required as a cofactor.

It carries out the reaction N(6)-[(R)-lipoyl]-L-lysyl-[glycine-cleavage complex H protein] + glycine + H(+) = N(6)-[(R)-S(8)-aminomethyldihydrolipoyl]-L-lysyl-[glycine-cleavage complex H protein] + CO2. The glycine cleavage system catalyzes the degradation of glycine. The P protein binds the alpha-amino group of glycine through its pyridoxal phosphate cofactor; CO(2) is released and the remaining methylamine moiety is then transferred to the lipoamide cofactor of the H protein. This Staphylococcus aureus (strain Mu50 / ATCC 700699) protein is Probable glycine dehydrogenase (decarboxylating) subunit 2.